The chain runs to 311 residues: tRNA dimethylallyltransferase (311 aa).

ATP is bound at residue 8–15 (GPTGVGKS). 10–15 (TGVGKS) provides a ligand contact to substrate.

The protein belongs to the IPP transferase family. As to quaternary structure, monomer. Mg(2+) serves as cofactor.

The enzyme catalyses adenosine(37) in tRNA + dimethylallyl diphosphate = N(6)-dimethylallyladenosine(37) in tRNA + diphosphate. Catalyzes the transfer of a dimethylallyl group onto the adenine at position 37 in tRNAs that read codons beginning with uridine, leading to the formation of N6-(dimethylallyl)adenosine (i(6)A). The protein is tRNA dimethylallyltransferase of Mycobacterium leprae (strain Br4923).